The primary structure comprises 340 residues: Fructose-1,6-bisphosphatase class 1 (340 aa).

Mg(2+) contacts are provided by E107, D126, L128, and D129. A substrate-binding site is contributed by N215. Position 287 (E287) interacts with Mg(2+).

The protein belongs to the FBPase class 1 family. In terms of assembly, homotetramer. It depends on Mg(2+) as a cofactor.

Its subcellular location is the cytoplasm. It catalyses the reaction beta-D-fructose 1,6-bisphosphate + H2O = beta-D-fructose 6-phosphate + phosphate. It participates in carbohydrate biosynthesis; gluconeogenesis. The sequence is that of Fructose-1,6-bisphosphatase class 1 from Brucella canis (strain ATCC 23365 / NCTC 10854 / RM-666).